The chain runs to 325 residues: tRNA N6-adenosine threonylcarbamoyltransferase (325 aa).

Fe cation-binding residues include His-111 and His-115. Residues 134–138, Asp-167, Gly-180, and Asn-277 each bind substrate; that span reads LISGG. Fe cation is bound at residue Asp-305.

This sequence belongs to the KAE1 / TsaD family. The cofactor is Fe(2+).

It is found in the cytoplasm. It localises to the secreted. It catalyses the reaction L-threonylcarbamoyladenylate + adenosine(37) in tRNA = N(6)-L-threonylcarbamoyladenosine(37) in tRNA + AMP + H(+). Functionally, required for the formation of a threonylcarbamoyl group on adenosine at position 37 (t(6)A37) in tRNAs that read codons beginning with adenine. Is involved in the transfer of the threonylcarbamoyl moiety of threonylcarbamoyl-AMP (TC-AMP) to the N6 group of A37, together with TsaE and TsaB. TsaD likely plays a direct catalytic role in this reaction. The polypeptide is tRNA N6-adenosine threonylcarbamoyltransferase (Mannheimia haemolytica (Pasteurella haemolytica)).